Reading from the N-terminus, the 122-residue chain is ATP synthase epsilon chain (122 aa).

The protein belongs to the ATPase epsilon chain family. F-type ATPases have 2 components, CF(1) - the catalytic core - and CF(0) - the membrane proton channel. CF(1) has five subunits: alpha(3), beta(3), gamma(1), delta(1), epsilon(1). CF(0) has three main subunits: a, b and c.

Its subcellular location is the cell membrane. Produces ATP from ADP in the presence of a proton gradient across the membrane. The polypeptide is ATP synthase epsilon chain (Rhodococcus opacus (strain B4)).